The chain runs to 355 residues: MRLRTPLTELIGIEHPVVQTGMGWVAGARLVSATANAGGLGILASATMTLDELAAAITKVKAVTDKPFGVNIRADAADAGDRVELMIREGVRVASFALAPKQQLIARLKEAGAVVIPSIGAAKHARKVAAWGADAMIVQGGEGGGHTGPVATTLLLPSVLDAVAGTGIPVIAAGGFFDGRGLAAALCYGAAGVAMGTRFLLTSDSTVPDAVKRRYLQAGLDGTVVTTRVDGMPHRVLRTELVEKLESGSRARGFAAALRNAGKFRRMSQMTWRSMIRDGLTMRHGKELTWSQVLMAANTPMLLKAGLVDGNTEAGVLASGQVAGILDDLPSCKELIESIVLDAITHLQTASALVE.

Residues 21 to 23 (GMG), 173 to 175 (AGG), and 196 to 197 (GT) each bind FMN.

This sequence belongs to the nitronate monooxygenase family.

It carries out the reaction (3aS,4S,5R,7aS)-5-hydroxy-7a-methyl-1-oxo-octahydro-1H-indene-4-carboxyl-CoA + NAD(+) = (5R,7aS)-5-hydroxy-7a-methyl-1-oxo-2,3,5,6,7,7a-hexahydro-1H-indene-carboxyl-CoA + NADH + H(+). The protein operates within steroid metabolism; cholesterol degradation. Its activity is regulated as follows. Requires the presence of IpdF. Functionally, involved in the final steps of cholesterol and steroid degradation. Probably catalyzes the introduction of a double bound into the C ring of 5OH-HIC-CoA, leading to the formation of (5R,7aS)-5-hydroxy-7a-methyl-1-oxo-3,5,6,7-tetrahydro-2H-indene-4-carboxyl-CoA. This chain is (3aS,4S,5R,7aS)-5-hydroxy-7a-methyl-1-oxo-octahydro-1H-indene-4-carboxyl-CoA dehydrogenase, found in Mycobacterium tuberculosis (strain ATCC 25618 / H37Rv).